The chain runs to 513 residues: Protein CYCLOPS (513 aa).

Disordered stretches follow at residues 329-380 (QGRT…STQN) and 395-435 (DDRK…AEAK). The span at 333 to 347 (ASGEPSQSESSAAAP) shows a compositional bias: low complexity. The span at 359-380 (PSNSNQTLGDSSWKQVGESTQN) shows a compositional bias: polar residues. 2 short sequence motifs (nuclear localization signal) span residues 397–400 (RKRK) and 421–424 (KKRR). The stretch at 447 to 513 (MQAILKRCEN…ERILSETGKI (67 aa)) forms a coiled coil.

This sequence belongs to the CYCLOPS family. In terms of assembly, forms homodimers. Interacts with CCAMK. In terms of tissue distribution, highly expressed in roots. Expressed in root hairs and nodules. Not detected in leaves or flowers.

Its subcellular location is the nucleus. In terms of biological role, involved symbiotic signaling. Required for root infection by symbiotic rhizobia, infection thread (IT) formation, and nodule development. Required for proper induction of early nodulin gene expression. Probably not involved in nodule organogenesis. Involved in arbuscular mycorrhizal (AM) symbiosis. Required for fungal infection of the outer cortical cell layers, and for arbuscule development during the AM symbiosis. Acts downstream of CCAMK. Required for symbiosome formation (i.e. the release of the bacteria from the ITs) and subsequent symbiosome development. Required for the expression of the nodule-specific RPG gene, which controls proper IT growth and is essential for symbiosome formation. Acts upstream of ERN1, a transcriptional regulator required for nodulation. The chain is Protein CYCLOPS from Medicago truncatula (Barrel medic).